Here is an 85-residue protein sequence, read N- to C-terminus: Large ribosomal subunit protein bL27 (85 aa).

A disordered region spans residues 1–20 (MATKKAGGSTRNGRDSEAKR).

Belongs to the bacterial ribosomal protein bL27 family.

The protein is Large ribosomal subunit protein bL27 of Actinobacillus pleuropneumoniae serotype 5b (strain L20).